Reading from the N-terminus, the 218-residue chain is Eukaryotic translation initiation factor 3 subunit K (218 aa).

Position 2 is an N-acetylalanine (Ala2). Thr28 is subject to Phosphothreonine. Positions 42–204 (YDLEANLAVL…SIKPKNIVEK (163 aa)) constitute a PCI domain. Ser217 bears the Phosphoserine mark.

This sequence belongs to the eIF-3 subunit K family. As to quaternary structure, component of the eukaryotic translation initiation factor 3 (eIF-3) complex, which is composed of 13 subunits: EIF3A, EIF3B, EIF3C, EIF3D, EIF3E, EIF3F, EIF3G, EIF3H, EIF3I, EIF3J, EIF3K, EIF3L and EIF3M. The eIF-3 complex appears to include 3 stable modules: module A is composed of EIF3A, EIF3B, EIF3G and EIF3I; module B is composed of EIF3F, EIF3H, and EIF3M; and module C is composed of EIF3C, EIF3D, EIF3E, EIF3K and EIF3L. EIF3C of module C binds EIF3B of module A and EIF3H of module B, thereby linking the three modules. EIF3J is a labile subunit that binds to the eIF-3 complex via EIF3B. The eIF-3 complex interacts with RPS6KB1 under conditions of nutrient depletion. Mitogenic stimulation leads to binding and activation of a complex composed of MTOR and RPTOR, leading to phosphorylation and release of RPS6KB1 and binding of EIF4B to eIF-3. Identified in a HCV IRES-mediated translation complex, at least composed of EIF3C, IGF2BP1, RPS3 and HCV RNA-replicon. Interacts with ALKBH4, IFIT1 and IFIT2.

The protein localises to the nucleus. It localises to the cytoplasm. Component of the eukaryotic translation initiation factor 3 (eIF-3) complex, which is required for several steps in the initiation of protein synthesis. The eIF-3 complex associates with the 40S ribosome and facilitates the recruitment of eIF-1, eIF-1A, eIF-2:GTP:methionyl-tRNAi and eIF-5 to form the 43S pre-initiation complex (43S PIC). The eIF-3 complex stimulates mRNA recruitment to the 43S PIC and scanning of the mRNA for AUG recognition. The eIF-3 complex is also required for disassembly and recycling of post-termination ribosomal complexes and subsequently prevents premature joining of the 40S and 60S ribosomal subunits prior to initiation. The eIF-3 complex specifically targets and initiates translation of a subset of mRNAs involved in cell proliferation, including cell cycling, differentiation and apoptosis, and uses different modes of RNA stem-loop binding to exert either translational activation or repression. In Mus musculus (Mouse), this protein is Eukaryotic translation initiation factor 3 subunit K (Eif3k).